The chain runs to 1281 residues: MSQHLPLVAAQPGIWMAEKLSDLPSAWSVAHYVELTGEVDAPLLARAVVAGLAQADTLRMRFTEDNGEVWQWVDDALIFELPEIIDLRTNIDPHGTAQALMLADLQQDLRVDSGKPLVFHQLIQVADNRWYWYQRYHHLLVDGFSFPAITRQIANIYCALLRGEPTPASPFTPFADVVEEYQQYRESEAWQRDAAFWVEQRRQLPPPASLSPAPLAGRSASADILRLKMEFTDGEFRQLATQLSGVQRTDLALALTALWLGRLCNRMDYAAGFIFMRRLGSAALTATGPVLNVLPLGIHIAAQETLPELATRLATRLAAQLKKMRRHQRYDAEQIVRDSGRAAGDEPLFGPVLNIKVFDYQLDIPGVQAQTHTLATGPVNDLELALFPDEHGDLSIEILANKQRYDEPTLIQHAERLKMLIAQFAADPALLCGDVDIMLPGEYAQLAQINATQVEIPETTLSALVAEQAAKTPDAPALADARYLFSYREMHEQVVALANLLRERGVKPGDSVAVALPRSVFLTLALHAIVEAGAAWLPLDTGYPDDRLKMMLEDARPSLLITTDDQLPRFSDVPNLTNLCYNAPLTPQGSAPLQLSQPHHTAYIIFTSGSTGRPKGVMVGQTAIVNRLLWMQNHYPLTGEDVVAQKTPCSFDVSVWEFFWPFIAGAKLVMAEPEAHRDPLAMQQFFAEYGVTTTHFVPSMLAAFVASLTPQTARQSCVTLKQVFCSGEALPADLCREWQQLTGAPLHNLYGPTEAAVDVSWYPAFGEELAQVRGSSVPIGYPVWNTGLRILDAMMHPVPPGVAGDLYLTGIQLAQGYLGRPDLTASRFIADPFAPGERMYRTGDVARWLDNGAVEYLGRSDDQLKIRGQRIELGEIDRVMQALPDVKQAVTHACVINQAAATGGDARQLVGYLVSQSGLPLDTSALQAQLRETLPPHMVPVVLLQLPQLPLSANGKLDRKALPLPELKAQAPGRAPKAGSETIIAAAFASLLGCDVQDADADFFALGGHSLLAMKLAAQLSRQFARQVTPGQVMVASTVAKLATIIDGEEDSSRRMGFETILPLREGNGPTLFCFHPASGFAWQFSVLSRYLDPQWSIIGIQSPRPHGPMQTATNLDEVCEAHLATLLEQQPHGIAARLRARGEQVAFLGLLDTWPPETQNWQEKEANGLDPEVLAEINREREAFLAAQQGSTSTELFTTIEGNYADAVRLLTTAHSVPFDGKATLFVAERTLQEGMSPERAWSPWIAELDIYRQDCAHVDIISPGAFVKIGPIIRATLNR.

Residues 1–301 form an elongation/condensation region; the sequence is MSQHLPLVAA…NVLPLGIHIA (301 aa). Residues 486–891 form an adenylation region; that stretch reads SYREMHEQVV…ALPDVKQAVT (406 aa). The 76-residue stretch at 975–1050 folds into the Carrier domain; the sequence is APKAGSETII…KLATIIDGEE (76 aa). An O-(pantetheine 4'-phosphoryl)serine modification is found at Ser1010. Positions 1070–1281 are thioesterase; the sequence is PTLFCFHPAS…GPIIRATLNR (212 aa). His1259 functions as the Proton acceptor; for thioesterase activity in the catalytic mechanism.

The protein belongs to the ATP-dependent AMP-binding enzyme family. EntF subfamily. As to quaternary structure, proteins EntB, EntD, EntE and EntF are the component of the enterobactin synthase. Components probably do not form a stable complex. EntF acts as a catalytic monomer. Requires pantetheine 4'-phosphate as cofactor. In terms of processing, 4'-phosphopantetheine is transferred from CoA to a specific serine of apo-EntF by EntD. Holo-EntF so formed is then acylated with seryl-AMP.

The protein resides in the cytoplasm. It carries out the reaction 3 2,3-dihydroxybenzoate + 3 L-serine + 6 ATP = enterobactin + 6 AMP + 6 diphosphate + 4 H(+). The enzyme catalyses holo-[peptidyl-carrier protein] + L-serine + ATP = L-seryl-[peptidyl-carrier protein] + AMP + diphosphate. It functions in the pathway siderophore biosynthesis; enterobactin biosynthesis. In terms of biological role, involved in the biosynthesis of the siderophore enterobactin (enterochelin), which is a macrocyclic trimeric lactone of N-(2,3-dihydroxybenzoyl)-serine. EntF catalyzes the activation of L-serine via ATP-dependent PPi exchange reaction to form seryladenylate. Activated L-serine is loaded onto the peptidyl carrier domain via a thioester linkage to the phosphopanthetheine moiety, forming seryl-S-Ppant-EntF. EntF acts then as the sole catalyst for the formation of the three amide and three ester linkages found in enterobactin, using seryladenylate and 2,3-dihydroxybenzoate-S-Ppant-EntB (DHB-S-Ppant-EntB) as substrates, via the formation of a DHB-Ser-S-Ppant-EntF intermediate. The polypeptide is Enterobactin synthase component F (entF) (Shigella flexneri).